Here is a 294-residue protein sequence, read N- to C-terminus: Tetraspanin-15 (294 aa).

Residues 1-23 (MPRGDSEQVRYCARFSYLWLKFS) are Cytoplasmic-facing. The chain crosses the membrane as a helical span at residues 24 to 44 (LIIYSTVFWLIGALVLSVGIY). The Extracellular segment spans residues 45–62 (AEVERQKYKTLESAFLAP). The chain crosses the membrane as a helical span at residues 63–83 (AIILILLGVVMFMVSFIGVLA). Topologically, residues 84–93 (SLRDNLYLLQ) are cytoplasmic. Residues 94–114 (AFMYILGICLIMELIGGVVAL) form a helical membrane-spanning segment. Residues 115–235 (TFRNQTIDFL…WFMDNYTIMA (121 aa)) are Extracellular-facing. An N-linked (GlcNAc...) asparagine glycan is attached at Asn-118. 4 disulfides stabilise this stretch: Cys-154–Cys-219, Cys-155–Cys-185, Cys-171–Cys-179, and Cys-186–Cys-198. N-linked (GlcNAc...) asparagine glycosylation is found at Asn-189 and Asn-230. A helical membrane pass occupies residues 236-256 (GILLGILLPQFLGVLLTLLYI). Topologically, residues 257–294 (TRVEDIIMEHSVTDGLLGPGAKPSVEAAGTGCCLCYPN) are cytoplasmic.

The protein belongs to the tetraspanin (TM4SF) family. As to quaternary structure, interacts with ADAM10; the interaction influences ADAM10 substrate specificity, endocytosis and turnover. Post-translationally, palmitoylated.

The protein resides in the cell membrane. It is found in the late endosome membrane. Functionally, part of TspanC8 subgroup, composed of 6 members that interact with the transmembrane metalloprotease ADAM10. This interaction is required for ADAM10 exit from the endoplasmic reticulum and for enzymatic maturation and trafficking to the cell surface as well as substrate specificity. Different TspanC8/ADAM10 complexes have distinct substrates. Promotes ADAM10-mediated cleavage of CDH2. Negatively regulates ligand-induced Notch activity probably by regulating ADAM10 activity. This chain is Tetraspanin-15, found in Homo sapiens (Human).